Reading from the N-terminus, the 466-residue chain is Asparagine--tRNA ligase (466 aa).

Belongs to the class-II aminoacyl-tRNA synthetase family. In terms of assembly, homodimer.

It localises to the cytoplasm. The enzyme catalyses tRNA(Asn) + L-asparagine + ATP = L-asparaginyl-tRNA(Asn) + AMP + diphosphate + H(+). The chain is Asparagine--tRNA ligase from Vibrio cholerae serotype O1 (strain ATCC 39315 / El Tor Inaba N16961).